A 274-amino-acid chain; its full sequence is MRPWLLLLVGLSSFFALSTSVNRAKNSGSDFDLESRASTTNVHSILSKRKLRAFGGDTNTLKDSGKARREEKVWKLFCSVFLQLDDKKKCMFETNQVSSHQPEPRPALSFMPGPKPAHSLVPESKPVRSLMTGNAPVRSIATELKLVLPRITETVKNPSKSQVVMLWLHKVADFSKSEHGVNTMAYRTLYEWLSPSFSDAKLAKFFVGLREDEALRETAEKMLAYMLIKSTSTEAVGRAWLKSGEHPSRLFESMNFKEADFKDTVFLGWLKYAS.

The first 20 residues, 1 to 20, serve as a signal peptide directing secretion; that stretch reads MRPWLLLLVGLSSFFALSTS. The short motif at 49-72 is the RxLR-dEER element; the sequence is RKLRAFGGDTNTLKDSGKARREEK.

Belongs to the RxLR effector family.

It localises to the secreted. The protein localises to the host nucleus. It is found in the host cytoplasm. Functionally, secreted effector that completely suppresses the host cell death induced by cell death-inducing proteins. In Plasmopara viticola (Downy mildew of grapevine), this protein is Secreted RxLR effector protein 144.